The primary structure comprises 85 residues: Small ribosomal subunit protein bS18 (85 aa).

It belongs to the bacterial ribosomal protein bS18 family. In terms of assembly, part of the 30S ribosomal subunit. Forms a tight heterodimer with protein bS6.

Its function is as follows. Binds as a heterodimer with protein bS6 to the central domain of the 16S rRNA, where it helps stabilize the platform of the 30S subunit. This is Small ribosomal subunit protein bS18 from Helicobacter pylori (strain P12).